The following is a 190-amino-acid chain: Potassium-transporting ATPase KdpC subunit (190 aa).

The chain crosses the membrane as a helical span at residues 10 to 30; it reads TFIFLLLITGGVYPLLTTVLG.

The protein belongs to the KdpC family. As to quaternary structure, the system is composed of three essential subunits: KdpA, KdpB and KdpC.

It localises to the cell inner membrane. Its function is as follows. Part of the high-affinity ATP-driven potassium transport (or Kdp) system, which catalyzes the hydrolysis of ATP coupled with the electrogenic transport of potassium into the cytoplasm. This subunit acts as a catalytic chaperone that increases the ATP-binding affinity of the ATP-hydrolyzing subunit KdpB by the formation of a transient KdpB/KdpC/ATP ternary complex. The sequence is that of Potassium-transporting ATPase KdpC subunit from Escherichia coli (strain 55989 / EAEC).